We begin with the raw amino-acid sequence, 710 residues long: Exocyst complex component 5 (710 aa).

Positions 44 to 96 (DTFIQTIKDLKILQEKQQSKCERLEESLRQEKESHAKKIAKLQERHQTAIDVF) form a coiled coil.

The protein belongs to the SEC10 family. In terms of assembly, the exocyst complex is composed of Sec3/Exoc1, Sec5/Exoc2, Sec6/Exoc3, Sec8/Exoc4, Sec10/Exoc5, Sec15/Exoc6, Exo70/Exoc7 and Exo84/Exoc8.

Component of the exocyst complex involved in the docking of exocytic vesicles with fusion sites on the plasma membrane. This Drosophila melanogaster (Fruit fly) protein is Exocyst complex component 5.